The following is a 377-amino-acid chain: UDP-N,N'-diacetylbacillosamine 2-epimerase (hydrolyzing) (377 aa).

This sequence belongs to the UDP-N-acetylglucosamine 2-epimerase family.

It carries out the reaction UDP-N,N'-diacetylbacillosamine + H2O = 2,4-diacetamido-2,4,6-trideoxy-alpha-D-mannopyranose + UDP + H(+). Its function is as follows. Involved in biosynthesis of legionaminic acid (5,7-diamino-3,5,7,9-tetradeoxy-D-glycero-D-galacto-non-2-ulosonic acid)(Leg), a sialic acid-like derivative that is incorporated into virulence-associated cell surface glycoconjugates such as lipopolysaccharide (LPS) which could be a key determinant in the ability of L.pneumophila to inhibit the fusion of phagosomes with lysosomes. LPS contains a majority alpha2,4-linked homomer of legionaminic acid. Catalyzes the conversion of UDP-N,N'-diacetylbacillosamine (Bac2Ac4Ac) into 2,4-diacetamido-2,4,6-trideoxymannose and UDP. This chain is UDP-N,N'-diacetylbacillosamine 2-epimerase (hydrolyzing), found in Legionella pneumophila subsp. pneumophila (strain Philadelphia 1 / ATCC 33152 / DSM 7513).